We begin with the raw amino-acid sequence, 392 residues long: Formate-dependent phosphoribosylglycinamide formyltransferase (392 aa).

N(1)-(5-phospho-beta-D-ribosyl)glycinamide-binding positions include 22-23 (EL) and E82. Residues R114, K155, 160-165 (SSGKGQ), 195-198 (EGVV), and E203 contribute to the ATP site. Residues 119–308 (RLAAEELQLP…EFALHVRAFL (190 aa)) enclose the ATP-grasp domain. Mg(2+) contacts are provided by E267 and E279. Residues D286, K355, and 362 to 363 (RR) each bind N(1)-(5-phospho-beta-D-ribosyl)glycinamide.

The protein belongs to the PurK/PurT family. As to quaternary structure, homodimer.

The enzyme catalyses N(1)-(5-phospho-beta-D-ribosyl)glycinamide + formate + ATP = N(2)-formyl-N(1)-(5-phospho-beta-D-ribosyl)glycinamide + ADP + phosphate + H(+). It functions in the pathway purine metabolism; IMP biosynthesis via de novo pathway; N(2)-formyl-N(1)-(5-phospho-D-ribosyl)glycinamide from N(1)-(5-phospho-D-ribosyl)glycinamide (formate route): step 1/1. In terms of biological role, involved in the de novo purine biosynthesis. Catalyzes the transfer of formate to 5-phospho-ribosyl-glycinamide (GAR), producing 5-phospho-ribosyl-N-formylglycinamide (FGAR). Formate is provided by PurU via hydrolysis of 10-formyl-tetrahydrofolate. This chain is Formate-dependent phosphoribosylglycinamide formyltransferase, found in Shigella dysenteriae serotype 1 (strain Sd197).